The following is a 595-amino-acid chain: Isoprene synthase, chloroplastic (595 aa).

The N-terminal 37 residues, Met1–Arg37, are a transit peptide targeting the chloroplast. A dimethylallyl diphosphate-binding site is contributed by Asp345. Mg(2+)-binding residues include Asp345 and Asp349. The DDXXD motif signature appears at Asp345–Asp349. Residues Glu423, Arg486, and Asn489 each contribute to the dimethylallyl diphosphate site. Mg(2+)-binding residues include Asn489, Ser493, and Glu497.

It belongs to the terpene synthase family. Tpsb subfamily. The cofactor is Mg(2+). Predominantly expressed in leaves.

It is found in the plastid. The protein resides in the chloroplast. It carries out the reaction dimethylallyl diphosphate = isoprene + diphosphate. It participates in terpene metabolism. Its function is as follows. Lyase that catalyzes the formation of isoprene from dimethylallyl diphosphate, but not from isopentenyl diphosphate or geranyl diphosphate. This is Isoprene synthase, chloroplastic from Populus alba (White poplar).